Consider the following 94-residue polypeptide: Exodeoxyribonuclease 7 small subunit (94 aa).

Residues 1-21 form a disordered region; it reads MPRAPNDAPSASATPSATPAS.

This sequence belongs to the XseB family. Heterooligomer composed of large and small subunits.

It is found in the cytoplasm. It catalyses the reaction Exonucleolytic cleavage in either 5'- to 3'- or 3'- to 5'-direction to yield nucleoside 5'-phosphates.. In terms of biological role, bidirectionally degrades single-stranded DNA into large acid-insoluble oligonucleotides, which are then degraded further into small acid-soluble oligonucleotides. The polypeptide is Exodeoxyribonuclease 7 small subunit (Ralstonia pickettii (strain 12J)).